A 382-amino-acid chain; its full sequence is Ribonuclease D (382 aa).

One can recognise a 3'-5' exonuclease domain in the interval 4–169 (ITTTAELASV…DVFAALDADL (166 aa)). Residues 208–289 (KPKDLAVMME…QRGLARDPRE (82 aa)) enclose the HRDC domain.

Belongs to the RNase D family. A divalent metal cation is required as a cofactor.

The protein localises to the cytoplasm. The enzyme catalyses Exonucleolytic cleavage that removes extra residues from the 3'-terminus of tRNA to produce 5'-mononucleotides.. Functionally, exonuclease involved in the 3' processing of various precursor tRNAs. Initiates hydrolysis at the 3'-terminus of an RNA molecule and releases 5'-mononucleotides. In Nitrobacter hamburgensis (strain DSM 10229 / NCIMB 13809 / X14), this protein is Ribonuclease D.